Consider the following 137-residue polypeptide: Large ribosomal subunit protein uL16 (137 aa).

This sequence belongs to the universal ribosomal protein uL16 family. In terms of assembly, part of the 50S ribosomal subunit.

Binds 23S rRNA and is also seen to make contacts with the A and possibly P site tRNAs. This chain is Large ribosomal subunit protein uL16, found in Coxiella burnetii (strain RSA 331 / Henzerling II).